We begin with the raw amino-acid sequence, 225 residues long: Ribosome maturation factor RimM (225 aa).

The PRC barrel domain occupies 144–225 (ADEFYWVDLI…RIVVDWEADY (82 aa)).

This sequence belongs to the RimM family. Binds ribosomal protein uS19.

It localises to the cytoplasm. Its function is as follows. An accessory protein needed during the final step in the assembly of 30S ribosomal subunit, possibly for assembly of the head region. Essential for efficient processing of 16S rRNA. May be needed both before and after RbfA during the maturation of 16S rRNA. It has affinity for free ribosomal 30S subunits but not for 70S ribosomes. The chain is Ribosome maturation factor RimM from Burkholderia ambifaria (strain MC40-6).